Here is a 205-residue protein sequence, read N- to C-terminus: Homeobox protein goosecoid-2 (205 aa).

Disordered stretches follow at residues Ser33–Ala58 and Lys185–Cys205. Residues Thr126–Lys185 constitute a DNA-binding region (homeobox).

Belongs to the paired homeobox family. Bicoid subfamily. As to expression, detected in adult testis and pituitary, and in 9-10 week fetal tissue (thorax). Probably expressed in other tissues at low levels.

The protein localises to the nucleus. May have a role in development. May regulate its own transcription. May bind the bicoid consensus sequence TAATCC. This Homo sapiens (Human) protein is Homeobox protein goosecoid-2 (GSC2).